A 75-amino-acid chain; its full sequence is Probable protein BRICK1 (75 aa).

Positions 41–72 form a coiled coil; it reads MSCRSRLATLNEKLTALERRIEYIEARVTKGE.

Belongs to the BRK1 family.

The protein localises to the cytoplasm. The protein resides in the cytoskeleton. Functionally, involved in regulation of actin and microtubule organization. Part of a WAVE complex that activates the Arp2/3 complex. The polypeptide is Probable protein BRICK1 (brk1) (Danio rerio (Zebrafish)).